The following is a 95-amino-acid chain: Small ribosomal subunit protein bS16 (95 aa).

The protein belongs to the bacterial ribosomal protein bS16 family.

This chain is Small ribosomal subunit protein bS16, found in Thermosipho melanesiensis (strain DSM 12029 / CIP 104789 / BI429).